A 9159-amino-acid chain; its full sequence is Halomucin (9159 aa).

The N-terminal stretch at 1–30 (MSQTAKPIFAVVVALIVLISGVAFIGSVSA) is a signal peptide. C-type lectin domains follow at residues 644-776 (TTGN…YLVE) and 929-1060 (YDGH…VEYG). Positions 1310–1332 (QPQTVNDPDAVSTRNNNVGSNGL) are enriched in polar residues. A disordered region spans residues 1310-1351 (QPQTVNDPDAVSTRNNNVGSNGLDSKIEDDQNNGADGNPHGT). The interval 1756-3380 (VGGLIGESSG…GFNGEHVGGL (1625 aa)) is V-G-G-L motif-rich region. 8 disordered regions span residues 3484–3514 (GATA…PAPQ), 4878–4912 (ESYW…TTPA), 6570–6589 (TDSA…SSGQ), 7047–7097 (TPTV…GINT), 7660–7702 (ATDS…NPGG), 7888–7923 (IDGD…EPAL), 8212–8237 (STQQ…GAAD), and 8369–8614 (DSTA…GSST). The segment covering 3495-3505 (GTPGGATGYGS) has biased composition (gly residues). Residues 4880–4890 (YWDKGATDKSD) are compositionally biased toward basic and acidic residues. Composition is skewed to polar residues over residues 7048-7057 (PTVTINSSSD) and 7068-7078 (GEDSTSSNESS). The span at 7079–7092 (DGTESDQGDPEDDI) shows a compositional bias: acidic residues. Positions 7681–7698 (VTGSTPTFVSSGTVTTPE) are enriched in polar residues. Residues 7686-7793 (PTFVSSGTVT…ITDVDEQPTG (108 aa)) enclose the Cadherin domain. 2 stretches are compositionally biased toward acidic residues: residues 7888 to 7898 (IDGDGLADDNE) and 7905 to 7920 (DNDD…EDQE). The segment covering 8378–8390 (ALEDDSSNQDSGD) has biased composition (acidic residues). Low complexity-rich tracts occupy residues 8391 to 8529 (DSSN…SSQN) and 8538 to 8548 (SAAAVGAESGS). Composition is skewed to gly residues over residues 8549 to 8566 (EMGG…GDGS) and 8574 to 8608 (AGGG…GSSS).

Probably glycosylated with sugar containing sialic acid. This may further contribute to its overall negative charge, thereby creating an aqueous shield covering the cells.

It is found in the secreted. In terms of biological role, may protect the organism from desiccation stress. May also contribute to the rigidity and maintenance of the unique square cell morphology of H.walsbyi. This Haloquadratum walsbyi (strain DSM 16790 / HBSQ001) protein is Halomucin (hmu).